The chain runs to 253 residues: Succinate dehydrogenase [ubiquinone] iron-sulfur subunit, mitochondrial (253 aa).

The 92-residue stretch at Phe23 to Met114 folds into the 2Fe-2S ferredoxin-type domain. Positions 74, 79, 82, and 94 each coordinate [2Fe-2S] cluster. A 4Fe-4S ferredoxin-type domain is found at Asp156–Tyr186. 3 residues coordinate [4Fe-4S] cluster: Cys166, Cys169, and Cys172. Residue Cys176 coordinates [3Fe-4S] cluster. Trp181 contributes to the a ubiquinone binding site. The [3Fe-4S] cluster site is built by Cys223 and Cys229. Cys233 serves as a coordination point for [4Fe-4S] cluster.

Belongs to the succinate dehydrogenase/fumarate reductase iron-sulfur protein family. As to quaternary structure, component of complex II composed of four subunits: a flavoprotein (FP), an iron-sulfur protein (IP), and a cytochrome b composed of a large and a small subunit. [2Fe-2S] cluster is required as a cofactor. Requires [3Fe-4S] cluster as cofactor. The cofactor is [4Fe-4S] cluster.

It is found in the mitochondrion inner membrane. It carries out the reaction a quinone + succinate = fumarate + a quinol. The protein operates within carbohydrate metabolism; tricarboxylic acid cycle; fumarate from succinate (eukaryal route): step 1/1. Functionally, iron-sulfur protein (IP) subunit of succinate dehydrogenase (SDH) that is involved in complex II of the mitochondrial electron transport chain and is responsible for transferring electrons from succinate to ubiquinone (coenzyme Q). This Candida glabrata (strain ATCC 2001 / BCRC 20586 / JCM 3761 / NBRC 0622 / NRRL Y-65 / CBS 138) (Yeast) protein is Succinate dehydrogenase [ubiquinone] iron-sulfur subunit, mitochondrial (SDH2).